Reading from the N-terminus, the 1089-residue chain is MPKRTDIKSILLIGSGPIVIGQACEFDYSGTQAAKTLKELGYRVVLINSNPATIMTDPEFADATYIEPITKESILSIIKKEKIDAILPTMGGQVALNVAMEVYESGLLGDVKFLGANPEAIKKGEDRQVFKECMKKIGMDLPKSMYAYNYDEALKAVDEIDFPLMIRASYTLGGAGSGVVYNMDEFKELTNTALALSPIHEILIEESLLGWKEYEMEVIRDRADNCIIVCSIENIDPMGVHTGDSITIAPALTLTDKEYQVMRNASFAILREIGVDTGGSNVQFAINPKNGRMIVIEMNPRVSRSSALASKATGYPIAKVATLLAVGFSLDEIKNDITGTPASFEPVIDYIVTKIPRFTFEKFPGANTTLGTAMKSVGEVMAIGRTFKESIQKALCSLERSLSGFDRVKFEDRNDLVFKIRNANEKRLLYVAQAFREGFSVEELYELCKIDPWFLTQIKEIVDFEEQIDMDILNNKALLRKAKTMGFSDKMIALLVNLKDNLELSQNDIYYVRMKQKIIAEFSEVDTCAGEFEALTPYLYSSINVSELTQSKNDAKDKKEKKVMIIGGGPNRIGQGIEFDYACVHASFALKDMGIKTIMYNCNPETVSTDYDTSDILYFEPIDFEHLRAVIEREKPDGVIVHFGGQTPLKFAKRLSAFGAKIIGTSARVIDMAEDRKKFAEFITKLGINQPKNSTATSVEEAVLKASDIGYPVLVRPSYVLGGRAMRVVNDEAELRLYMQEAVDVSDKSPVLIDQFLDNATEIDVDAICDGKDVYVAGIMEHIEEAGIHSGDSACSLPPCNIDEKMQEFIAQKTADIALNLGVVGLLNIQFALHNNELYMIEVNPRASRTIPFVSKATGIPLAKVATRVMWQGNLKEALKFYDTFKVVNFDTKILRPKTPKYMSVKEAVFPFAKLSGSDLELGPEMRSTGEVMGISKDFANSYAKSQIASFNHLPEQGVVFISLKDKDKKYTKKIAAEYVKLGFKLMATGGTCKEILESGFECELVHKISEGRPNVEDKLKNGEIHLVINTSDSHSFKGDTKKIRENIIRFKIPYFTNLRSALAGAKSIKAIQSKSCLDVKSLQEWLKS.

Positions 1–399 are carboxyphosphate synthetic domain; it reads MPKRTDIKSI…SIQKALCSLE (399 aa). Residues Arg-127, Arg-167, Gly-173, Gly-174, Glu-206, Leu-208, Glu-213, Gly-239, Val-240, His-241, Gln-283, and Glu-297 each coordinate ATP. An ATP-grasp 1 domain is found at 131-326; that stretch reads KECMKKIGMD…IAKVATLLAV (196 aa). Mg(2+) is bound by residues Gln-283, Glu-297, and Asn-299. 3 residues coordinate Mn(2+): Gln-283, Glu-297, and Asn-299. An oligomerization domain region spans residues 400-553; it reads RSLSGFDRVK…NVSELTQSKN (154 aa). The tract at residues 554 to 951 is carbamoyl phosphate synthetic domain; sequence DAKDKKEKKV…SYAKSQIASF (398 aa). The ATP-grasp 2 domain occupies 680-871; the sequence is AEFITKLGIN…LAKVATRVMW (192 aa). Arg-716, Gln-755, Leu-757, Glu-762, Gly-787, Ile-788, His-789, Ser-790, Gln-830, and Glu-842 together coordinate ATP. Mg(2+)-binding residues include Gln-830, Glu-842, and Asn-844. The Mn(2+) site is built by Gln-830, Glu-842, and Asn-844. Residues 952-1089 form the MGS-like domain; it reads NHLPEQGVVF…VKSLQEWLKS (138 aa). Residues 952–1089 form an allosteric domain region; it reads NHLPEQGVVF…VKSLQEWLKS (138 aa).

It belongs to the CarB family. As to quaternary structure, composed of two chains; the small (or glutamine) chain promotes the hydrolysis of glutamine to ammonia, which is used by the large (or ammonia) chain to synthesize carbamoyl phosphate. Tetramer of heterodimers (alpha,beta)4. The cofactor is Mg(2+). Mn(2+) serves as cofactor.

It carries out the reaction hydrogencarbonate + L-glutamine + 2 ATP + H2O = carbamoyl phosphate + L-glutamate + 2 ADP + phosphate + 2 H(+). The catalysed reaction is hydrogencarbonate + NH4(+) + 2 ATP = carbamoyl phosphate + 2 ADP + phosphate + 2 H(+). The protein operates within amino-acid biosynthesis; L-arginine biosynthesis; carbamoyl phosphate from bicarbonate: step 1/1. Its pathway is pyrimidine metabolism; UMP biosynthesis via de novo pathway; (S)-dihydroorotate from bicarbonate: step 1/3. Its function is as follows. Large subunit of the glutamine-dependent carbamoyl phosphate synthetase (CPSase). CPSase catalyzes the formation of carbamoyl phosphate from the ammonia moiety of glutamine, carbonate, and phosphate donated by ATP, constituting the first step of 2 biosynthetic pathways, one leading to arginine and/or urea and the other to pyrimidine nucleotides. The large subunit (synthetase) binds the substrates ammonia (free or transferred from glutamine from the small subunit), hydrogencarbonate and ATP and carries out an ATP-coupled ligase reaction, activating hydrogencarbonate by forming carboxy phosphate which reacts with ammonia to form carbamoyl phosphate. This Campylobacter jejuni subsp. jejuni serotype O:2 (strain ATCC 700819 / NCTC 11168) protein is Carbamoyl phosphate synthase large chain.